Here is a 512-residue protein sequence, read N- to C-terminus: MKKQHDTIIVLDFGSQYNQLIARRIREFGVYSELHPHTITAEEIKAMNPKGIIFSGGPNSVYGEGALHCDEKIFELGLPIFGICYGMQLMTQHFGGKVERANHREYGKAVLKVENESKLYANLPEEQVVWMSHGDLVTGLPEGFVVDATSESCPIAGMSNEEKNLYGVQFHPEVRHSEHGNDLIKNFVFGVCGCSEGWNMENFIEVELEKIRETVGDKKVLCALSGGVDSSVVAVLIHKAIGDQLTCIFVDHGLLRKGEAEGVMKTFSEGFHMNVIKVDAQERFMNKLKGVEDPEQKRKIIGNEFIYVFDDEASKLQGMDFLAQGTLYTDIVESGTATAQTIKSHHNVGGLPEDMQFKLIEPLNTLFKDEVRVLGSELGIPDEIVWRQPFPGPGLGIRVLGEITEEKLEIVRESDAILREEIIKAGLDREIWQYFTALPGMRSVGVMGDERTYDYTVGIRAVTSIDGMTADWARIPWDVLEKISVRIVNEVKHVNRIVYDVTSKPPATIEWE.

The Glutamine amidotransferase type-1 domain maps to 7 to 197 (TIIVLDFGSQ…VFGVCGCSEG (191 aa)). Cysteine 84 acts as the Nucleophile in catalysis. Residues histidine 171 and glutamate 173 contribute to the active site. The 190-residue stretch at 198–387 (WNMENFIEVE…LGIPDEIVWR (190 aa)) folds into the GMPS ATP-PPase domain. 225–231 (SGGVDSS) contributes to the ATP binding site.

Homodimer.

It carries out the reaction XMP + L-glutamine + ATP + H2O = GMP + L-glutamate + AMP + diphosphate + 2 H(+). Its pathway is purine metabolism; GMP biosynthesis; GMP from XMP (L-Gln route): step 1/1. In terms of biological role, catalyzes the synthesis of GMP from XMP. This chain is GMP synthase [glutamine-hydrolyzing], found in Bacillus cereus (strain G9842).